Reading from the N-terminus, the 157-residue chain is Dihydrofolate reductase type 6 (157 aa).

Residues 2–156 (KISLMAAVSE…IDYTYQIWAK (155 aa)) form the DHFR domain.

The protein belongs to the dihydrofolate reductase family. As to quaternary structure, homodimer.

The enzyme catalyses (6S)-5,6,7,8-tetrahydrofolate + NADP(+) = 7,8-dihydrofolate + NADPH + H(+). It participates in cofactor biosynthesis; tetrahydrofolate biosynthesis; 5,6,7,8-tetrahydrofolate from 7,8-dihydrofolate: step 1/1. Key enzyme in folate metabolism. Catalyzes an essential reaction for de novo glycine and purine synthesis, and for DNA precursor synthesis. This chain is Dihydrofolate reductase type 6 (dhfrVI), found in Proteus mirabilis.